The primary structure comprises 100 residues: Aspartyl/glutamyl-tRNA(Asn/Gln) amidotransferase subunit C (100 aa).

Belongs to the GatC family. As to quaternary structure, heterotrimer of A, B and C subunits.

It catalyses the reaction L-glutamyl-tRNA(Gln) + L-glutamine + ATP + H2O = L-glutaminyl-tRNA(Gln) + L-glutamate + ADP + phosphate + H(+). It carries out the reaction L-aspartyl-tRNA(Asn) + L-glutamine + ATP + H2O = L-asparaginyl-tRNA(Asn) + L-glutamate + ADP + phosphate + 2 H(+). Allows the formation of correctly charged Asn-tRNA(Asn) or Gln-tRNA(Gln) through the transamidation of misacylated Asp-tRNA(Asn) or Glu-tRNA(Gln) in organisms which lack either or both of asparaginyl-tRNA or glutaminyl-tRNA synthetases. The reaction takes place in the presence of glutamine and ATP through an activated phospho-Asp-tRNA(Asn) or phospho-Glu-tRNA(Gln). The protein is Aspartyl/glutamyl-tRNA(Asn/Gln) amidotransferase subunit C of Streptococcus equi subsp. equi (strain 4047).